The sequence spans 570 residues: Cation/calcium exchanger 1 (570 aa).

The next 13 helical transmembrane spans lie at 14–34 (LSLL…ASQT), 97–117 (SPVL…YLLG), 141–161 (MAGV…SSVV), 176–196 (ILGG…VLIG), 212–232 (VFLL…KVTI), 235–255 (ALCY…SHFF), 344–364 (CAVV…CSHY), 371–391 (LILY…AYLT), 401–421 (FSLV…YMIA), 427–447 (LLIS…LTVL), 479–499 (YAGP…ISSL), 513–533 (SLLE…VIMP), and 546–566 (GLLA…FGVL).

This sequence belongs to the Ca(2+):cation antiporter (CaCA) (TC 2.A.19) family. Cation/calcium exchanger (CCX) subfamily. In terms of tissue distribution, expressed in roots, leaves, stems and flowers.

The protein localises to the vacuole membrane. Its function is as follows. Vacuolar membrane-localized H(+)-dependent K(+) and Na(+) transporter. This is Cation/calcium exchanger 1 (CCX1) from Arabidopsis thaliana (Mouse-ear cress).